A 1063-amino-acid chain; its full sequence is Error-prone DNA polymerase (1063 aa).

It belongs to the DNA polymerase type-C family. DnaE2 subfamily.

It localises to the cytoplasm. It carries out the reaction DNA(n) + a 2'-deoxyribonucleoside 5'-triphosphate = DNA(n+1) + diphosphate. DNA polymerase involved in damage-induced mutagenesis and translesion synthesis (TLS). It is not the major replicative DNA polymerase. The chain is Error-prone DNA polymerase from Burkholderia mallei (strain ATCC 23344).